Consider the following 436-residue polypeptide: 3-ketoacyl-CoA thiolase (436 aa).

Cys-99 functions as the Acyl-thioester intermediate in the catalytic mechanism. Catalysis depends on proton acceptor residues His-392 and Cys-422.

This sequence belongs to the thiolase-like superfamily. Thiolase family. As to quaternary structure, heterotetramer of two alpha chains (FadJ) and two beta chains (FadI).

The protein resides in the cytoplasm. The catalysed reaction is an acyl-CoA + acetyl-CoA = a 3-oxoacyl-CoA + CoA. Its pathway is lipid metabolism; fatty acid beta-oxidation. Functionally, catalyzes the final step of fatty acid oxidation in which acetyl-CoA is released and the CoA ester of a fatty acid two carbons shorter is formed. The polypeptide is 3-ketoacyl-CoA thiolase (Escherichia coli O8 (strain IAI1)).